The chain runs to 1106 residues: Probable NAD-specific glutamate dehydrogenase (1106 aa).

Residue Lys-654 is part of the active site.

This sequence belongs to the Glu/Leu/Phe/Val dehydrogenases family. In terms of assembly, homotetramer.

It is found in the cytoplasm. The catalysed reaction is L-glutamate + NAD(+) + H2O = 2-oxoglutarate + NH4(+) + NADH + H(+). NAD(+)-dependent glutamate dehydrogenase which degrades glutamate to ammonia and alpha-ketoglutarate. The polypeptide is Probable NAD-specific glutamate dehydrogenase (gdh2) (Schizosaccharomyces pombe (strain 972 / ATCC 24843) (Fission yeast)).